The following is a 155-amino-acid chain: MADQNERAFQKQFGVNLNRKVKPGVTKKKILRRYRDVGLGFKTPREAIDGTYIDKKCPWTGDVRIRGRILIGVVRKTKMQRTIVIRRDYLHFVRKYSRFEKRHRNMSVHCSPAFRDVEHGDIVTIGECRPLSKTVRFNVLKVNKGQGAKKSFKKF.

Residue alanine 2 is modified to N-acetylalanine.

It belongs to the universal ribosomal protein uS17 family.

The protein is Small ribosomal subunit protein uS17 of Drosophila pseudoobscura pseudoobscura (Fruit fly).